The chain runs to 1233 residues: Structural maintenance of chromosomes protein 1A (1233 aa).

Position 32–39 (32–39 (GPNGSGKS)) interacts with ATP. 2 coiled-coil regions span residues 104 to 124 (EYKI…LEKL) and 163 to 503 (ELAQ…KAEI). A compositionally biased stretch (basic and acidic residues) spans 284–293 (IKEKDSELNQ). Disordered regions lie at residues 284–308 (IKEK…TSHK) and 348–369 (QEFE…TLEE). Phosphoserine is present on residues Ser358 and Ser360. The SMC hinge domain maps to 515 to 629 (VYGRLIDLCQ…DNVEDARRIA (115 aa)). 2 positions are modified to N6-acetyllysine: Lys648 and Lys713. Residues 660–935 (KAKARRWDEK…RHNLLQACKM (276 aa)) adopt a coiled-coil conformation. The disordered stretch occupies residues 947 to 968 (MDDISQEEGSSQGEDSVSGSQR). Residues 953–967 (EEGSSQGEDSVSGSQ) are compositionally biased toward low complexity. Phosphoserine is present on residues Ser957, Ser962, Ser966, and Ser970. A coiled-coil region spans residues 991–1068 (KDAQAEEEIK…FEQIKKERFD (78 aa)). Residue Lys1037 is modified to N6-acetyllysine.

Belongs to the SMC family. SMC1 subfamily. In terms of assembly, forms a heterodimer with SMC3 in cohesin complexes. Cohesin complexes are composed of the SMC1 (SMC1A or meiosis-specific SMC1B) and SMC3 heterodimer attached via their SMC hinge domain, RAD21 which link them, and one STAG protein (STAG1, STAG2 or meiosis-specific STAG3), which interacts with RAD21. In germ cell cohesin complexes, SMC1A is mutually exclusive with SMC1B. Found in a complex with CDCA5, SMC3 and RAD21, PDS5A/SCC-112 and PDS5B/APRIN. Interacts with NDC80, SYCP2, STAG3, BRCA1 and BRAT1. The cohesin complex interacts with the cohesin loading complex subunits NIPBL/Scc2 (via HEAT repeats) and MAU2/Scc4. NIPBL directly contacts all members of the complex, RAD21, SMC1A/B, SMC3 and STAG1. Interacts with RPGR. Found in a complex containing POLE and SMC3. In terms of processing, phosphorylated upon ionizing radiation or DNA methylation. Phosphorylation of Ser-957 and Ser-966 activates it and is required for S-phase checkpoint activation. Post-translationally, ubiquitinated by the DCX(DCAF15) complex, leading to its degradation.

It localises to the nucleus. The protein resides in the chromosome. The protein localises to the centromere. Its function is as follows. Involved in chromosome cohesion during cell cycle and in DNA repair. Involved in DNA repair via its interaction with BRCA1 and its related phosphorylation by ATM, and works as a downstream effector in the ATM/NBS1 branch of S-phase checkpoint. Central component of cohesin complex. The cohesin complex is required for the cohesion of sister chromatids after DNA replication. The cohesin complex apparently forms a large proteinaceous ring within which sister chromatids can be trapped. At anaphase, the complex is cleaved and dissociates from chromatin, allowing sister chromatids to segregate. The cohesin complex may also play a role in spindle pole assembly during mitosis. Involved in DNA repair via its interaction with BRCA1 and its related phosphorylation by ATM, or via its phosphorylation by ATR. Works as a downstream effector both in the ATM/NBS1 branch and in the ATR/MSH2 branch of S-phase checkpoint. The sequence is that of Structural maintenance of chromosomes protein 1A (SMC1A) from Bos taurus (Bovine).